The sequence spans 575 residues: Glycosyltransferase family 92 protein At1g27200 (575 aa).

Residues 22–44 traverse the membrane as a helical segment; the sequence is FLSQRYLILCFCCFFVLLFFLSS. The region spanning 293-540 is the GT92 domain; the sequence is LCVCTMLWNQ…TEAIEPPDWK (248 aa).

Belongs to the glycosyltransferase 92 family.

The protein resides in the membrane. This is Glycosyltransferase family 92 protein At1g27200 from Arabidopsis thaliana (Mouse-ear cress).